Consider the following 222-residue polypeptide: Octanoyltransferase (222 aa).

The region spanning 34–214 (AEAPSTVLLL…EFRKHEEALV (181 aa)) is the BPL/LPL catalytic domain. Substrate is bound by residues 72 to 79 (RGGKLTWH), 144 to 146 (AIG), and 157 to 159 (GIA). C175 acts as the Acyl-thioester intermediate in catalysis.

Belongs to the LipB family.

It is found in the cytoplasm. The enzyme catalyses octanoyl-[ACP] + L-lysyl-[protein] = N(6)-octanoyl-L-lysyl-[protein] + holo-[ACP] + H(+). It participates in protein modification; protein lipoylation via endogenous pathway; protein N(6)-(lipoyl)lysine from octanoyl-[acyl-carrier-protein]: step 1/2. Catalyzes the transfer of endogenously produced octanoic acid from octanoyl-acyl-carrier-protein onto the lipoyl domains of lipoate-dependent enzymes. Lipoyl-ACP can also act as a substrate although octanoyl-ACP is likely to be the physiological substrate. This Arthrobacter sp. (strain FB24) protein is Octanoyltransferase.